The sequence spans 244 residues: ATP synthase subunit a, chloroplastic (244 aa).

5 helical membrane passes run 35-55 (QVLI…VIAV), 92-112 (VPFI…GALL), 131-151 (INTT…AGLS), 196-216 (LVVV…VMFL), and 217-237 (GLFI…AYIG).

It belongs to the ATPase A chain family. F-type ATPases have 2 components, CF(1) - the catalytic core - and CF(0) - the membrane proton channel. CF(1) has five subunits: alpha(3), beta(3), gamma(1), delta(1), epsilon(1). CF(0) has four main subunits: a, b, b' and c.

It localises to the plastid. It is found in the chloroplast thylakoid membrane. In terms of biological role, key component of the proton channel; it plays a direct role in the translocation of protons across the membrane. This chain is ATP synthase subunit a, chloroplastic, found in Gossypium barbadense (Sea Island cotton).